Reading from the N-terminus, the 135-residue chain is uncharacterized protein (135 aa).

Residues 8–123 enclose the HotDog ACOT-type domain; the sequence is PKGIIVLKTL…IFIYVAINKT (116 aa).

Belongs to the acyl coenzyme A hydrolase family.

This is an uncharacterized protein from Buchnera aphidicola subsp. Acyrthosiphon pisum (strain APS) (Acyrthosiphon pisum symbiotic bacterium).